Reading from the N-terminus, the 506-residue chain is AMP phosphorylase (506 aa).

Residues Gly167, 193-198, and Thr202 contribute to the AMP site; that span reads SRAITG. Asp255 (proton donor) is an active-site residue. Residues Ser263 and Lys287 each contribute to the AMP site.

It belongs to the thymidine/pyrimidine-nucleoside phosphorylase family. Type 2 subfamily.

The enzyme catalyses AMP + phosphate = alpha-D-ribose 1,5-bisphosphate + adenine. It carries out the reaction CMP + phosphate = cytosine + alpha-D-ribose 1,5-bisphosphate. The catalysed reaction is UMP + phosphate = alpha-D-ribose 1,5-bisphosphate + uracil. In terms of biological role, catalyzes the conversion of AMP and phosphate to adenine and ribose 1,5-bisphosphate (R15P). Exhibits phosphorylase activity toward CMP and UMP in addition to AMP. Functions in an archaeal AMP degradation pathway, together with R15P isomerase and RubisCO. The sequence is that of AMP phosphorylase from Methanosarcina acetivorans (strain ATCC 35395 / DSM 2834 / JCM 12185 / C2A).